Reading from the N-terminus, the 367-residue chain is Glutamate 5-kinase (367 aa).

Lysine 8 serves as a coordination point for ATP. Residues serine 49, aspartate 136, and asparagine 148 each coordinate substrate. ATP is bound by residues 168 to 169 and 210 to 216; these read TD and TGGMATK. The 79-residue stretch at 275-353 folds into the PUA domain; sequence TGKLLLDAGA…DQIVQILGYE (79 aa).

This sequence belongs to the glutamate 5-kinase family.

Its subcellular location is the cytoplasm. The catalysed reaction is L-glutamate + ATP = L-glutamyl 5-phosphate + ADP. Its pathway is amino-acid biosynthesis; L-proline biosynthesis; L-glutamate 5-semialdehyde from L-glutamate: step 1/2. Its function is as follows. Catalyzes the transfer of a phosphate group to glutamate to form L-glutamate 5-phosphate. The protein is Glutamate 5-kinase of Synechococcus elongatus (strain ATCC 33912 / PCC 7942 / FACHB-805) (Anacystis nidulans R2).